The primary structure comprises 683 residues: DNA ligase (683 aa).

Residues 36–40, 85–86, and E119 contribute to the NAD(+) site; these read DAEYD and SL. The active-site N6-AMP-lysine intermediate is K121. Residues R142, E179, K295, and K319 each coordinate NAD(+). Residues C413, C416, C431, and C437 each contribute to the Zn(2+) site. Positions 596–683 constitute a BRCT domain; the sequence is TETLPLSGQT…EHQAHLGGEA (88 aa).

This sequence belongs to the NAD-dependent DNA ligase family. LigA subfamily. It depends on Mg(2+) as a cofactor. Mn(2+) serves as cofactor.

It carries out the reaction NAD(+) + (deoxyribonucleotide)n-3'-hydroxyl + 5'-phospho-(deoxyribonucleotide)m = (deoxyribonucleotide)n+m + AMP + beta-nicotinamide D-nucleotide.. In terms of biological role, DNA ligase that catalyzes the formation of phosphodiester linkages between 5'-phosphoryl and 3'-hydroxyl groups in double-stranded DNA using NAD as a coenzyme and as the energy source for the reaction. It is essential for DNA replication and repair of damaged DNA. This chain is DNA ligase, found in Hahella chejuensis (strain KCTC 2396).